Reading from the N-terminus, the 931-residue chain is Protocadherin gamma-B2 (931 aa).

Positions 1-30 (MKASSGRCGLVRWLQVLLPFLLSLFPGALP) are cleaved as a signal peptide. 6 Cadherin domains span residues 31–133 (VQIR…TPLF), 134–242 (KQTK…PPVF), 243–347 (SQDV…APEV), 348–452 (IVTS…APVF), 453–562 (QQTS…APRV), and 570–675 (DGSA…LPDL). Topologically, residues 31 to 691 (VQIRYSIPEE…SDPQAKLQFY (661 aa)) are extracellular. N419 and N545 each carry an N-linked (GlcNAc...) asparagine glycan. The chain crosses the membrane as a helical span at residues 692 to 712 (LVVALALISVLFFLAVILAIS). Residues 713–931 (LRLRLSSRSD…KKKSGKKEKK (219 aa)) lie on the Cytoplasmic side of the membrane. Disordered stretches follow at residues 814-840 (DWRF…WPNN) and 901-931 (ATLT…KEKK). The segment covering 815-840 (WRFSQAQRPGTSGSQNGDDTGTWPNN) has biased composition (polar residues). Basic residues predominate over residues 921-931 (NKKKSGKKEKK).

It localises to the cell membrane. Functionally, potential calcium-dependent cell-adhesion protein. May be involved in the establishment and maintenance of specific neuronal connections in the brain. This chain is Protocadherin gamma-B2 (PCDHGB2), found in Homo sapiens (Human).